The primary structure comprises 135 residues: Antennal-specific protein OS-C (135 aa).

Positions M1 to A27 are cleaved as a signal peptide. The tract at residues V43–A84 is disordered. Positions D49 to E67 are enriched in acidic residues.

Antenna. In the third antennal segment. Expressed in sencilla coeloconica.

This chain is Antennal-specific protein OS-C (Os-C), found in Drosophila melanogaster (Fruit fly).